We begin with the raw amino-acid sequence, 364 residues long: Tripartite motif-containing protein 54 (364 aa).

An RING-type zinc finger spans residues 26–82 (CPICLEMFSKPVVILPCQHNLCRKCANDVFQASNPLWQSRGSTTVSSGGRFRCPSCR). The B box-type zinc-finger motif lies at 121 to 163 (EQHLMCEEHEDEKINIYCLSCEVPTCSLCKVFGAHKDCEVAPL). 4 residues coordinate Zn(2+): cysteine 126, histidine 129, cysteine 149, and histidine 155. The interval 168-211 (KRQKSELSDGIAMLVAGNDRVQAVITQMEEVCQTIEDNSRRQKQ) is mediates microtubule-binding and homooligomerization. A coiled-coil region spans residues 194–252 (QMEEVCQTIEDNSRRQKQLLNQKFETLCAVLEERKGELLQALARVQEEKLQRVRSLIRQ). The COS domain maps to 271–329 (MEEPQMALYLQQAKELINKVGAMSKVELAGRPEPGYESMEQFSVIVEHVAEMLRTIDFQ). The segment at 328 to 364 (FQPGASGDEEDDEVTLDGEEGNTGLEEERLDGPEGLH) is disordered. Acidic residues predominate over residues 334-347 (GDEEDDEVTLDGEE). Basic and acidic residues predominate over residues 353-364 (EEERLDGPEGLH).

As to quaternary structure, homooligomer and heterooligomer. Interacts with TRIM63 and probably with TRIM55. Interacts with tubulin.

The protein localises to the cytoplasm. It is found in the cytoskeleton. Its subcellular location is the myofibril. The protein resides in the sarcomere. It localises to the z line. Its function is as follows. May bind and stabilize microtubules during myotubes formation. The sequence is that of Tripartite motif-containing protein 54 (Trim54) from Rattus norvegicus (Rat).